The following is a 156-amino-acid chain: Ribosomal RNA large subunit methyltransferase H (156 aa).

S-adenosyl-L-methionine-binding positions include L73, G104, and 123-128 (LSALTL).

This sequence belongs to the RNA methyltransferase RlmH family. Homodimer.

The protein resides in the cytoplasm. The catalysed reaction is pseudouridine(1915) in 23S rRNA + S-adenosyl-L-methionine = N(3)-methylpseudouridine(1915) in 23S rRNA + S-adenosyl-L-homocysteine + H(+). In terms of biological role, specifically methylates the pseudouridine at position 1915 (m3Psi1915) in 23S rRNA. The protein is Ribosomal RNA large subunit methyltransferase H of Shewanella denitrificans (strain OS217 / ATCC BAA-1090 / DSM 15013).